The primary structure comprises 81 residues: MNHDIPLKYFDIADEYATECAEPVAEAERTPLAHYFQLLLTRLMNNEEISEEAQHEMAAEAGINPVRIDEIAEFLNQWGNE.

This is an uncharacterized protein from Escherichia coli (strain K12).